We begin with the raw amino-acid sequence, 267 residues long: MIVHPSRENFSSAVNKGSDFRLKGEPLKHVLLVDDDVAMRHLIIEYLTIHAFKVTAVADSTQFTRVLSSATVDVVVVDLNLVREDGLEIVRNLAAKSDIPIIIISGDRLEETDKVVALELGASDFIAKPFSIREFLARIRVALRVRPNVVRSKDRRSFCFTDWTLNLRQRRLMSEAGGEVKLTAGEFNLLLAFLEKPRDVLSREQLLIASRVRDEEVYDRSIDVLILRLRRKLEADPSSPQLIKTARGAGYFFDADVQVSHGGTMAA.

Residues 29–143 (HVLLVDDDVA…EFLARIRVAL (115 aa)) form the Response regulatory domain. Asp78 carries the 4-aspartylphosphate modification. A DNA-binding region (ompR/PhoB-type) is located at residues 155–255 (RRSFCFTDWT…ARGAGYFFDA (101 aa)).

In terms of processing, phosphorylated by wide host range (WHR) VirA protein.

It localises to the cytoplasm. Functionally, virG is required for the positive regulation of at least two vir loci encoded by the Ti plasmid of A.tumefaciens. This Rhizobium radiobacter (Agrobacterium tumefaciens) protein is Regulatory protein VirG (virG).